The following is a 1258-amino-acid chain: Splicing factor, arginine/serine-rich 19 (1258 aa).

Disordered regions lie at residues 1–32 (MEEEDESRGKTEESGEDRGDGPPDRDPALSPS), 159–345 (KTVS…PRRR), 370–398 (GGPALPLPPLPPTDPEIEEGEIVQPEEEP), 410–1034 (PRQP…PPPM), 1114–1154 (GSLP…DKYL), and 1223–1258 (FRKHGRKPGDPPGPPRPPKEPGPPDKGGPGLPLPPL). A compositionally biased stretch (basic and acidic residues) spans 7-27 (SRGKTEESGEDRGDGPPDRDP). Positions 193–207 (SSASSSPSPSPSSSS) are enriched in low complexity. Residues 208–223 (PSPPPPPPPPPPPALP) show a composition bias toward pro residues. Over residues 228–237 (DIYDPFHPTD) the composition is skewed to basic and acidic residues. Serine 241 is modified (phosphoserine). Over residues 256–266 (TGSNPSSSAGT) the composition is skewed to polar residues. Residues 269 to 283 (PEEEEEEEEEEEEEG) are compositionally biased toward acidic residues. The residue at position 329 (threonine 329) is a Phosphothreonine. Residues 374–383 (LPLPPLPPTD) show a composition bias toward pro residues. Acidic residues predominate over residues 384-395 (PEIEEGEIVQPE). A compositionally biased stretch (low complexity) spans 414–426 (PASVATLASVAAP). Phosphoserine is present on residues serine 444 and serine 449. A compositionally biased stretch (basic residues) spans 480–491 (KILTQRRERYRQ). Phosphoserine is present on residues serine 493, serine 495, serine 512, and serine 520. 2 stretches are compositionally biased toward basic residues: residues 540–555 (TARRRSRSRSRRRSRS) and 562–579 (RGSHRSRSREKRRRRRRS). Phosphoserine occurs at positions 579 and 581. The span at 594 to 613 (RERHRGKRREGGKKKKKRSR) shows a compositional bias: basic residues. Residues 614–625 (SRAEKRSGDLEK) are compositionally biased toward basic and acidic residues. Threonine 665 is modified (phosphothreonine). 2 positions are modified to phosphoserine: serine 678 and serine 684. At tyrosine 691 the chain carries Phosphotyrosine. Residues serine 693 and serine 697 each carry the phosphoserine modification. 2 stretches are compositionally biased toward basic and acidic residues: residues 698-711 (ADERGAKGDKDRRR) and 721-743 (SREKASRRKALDGDRGRDRDRSS). Low complexity-rich tracts occupy residues 752–777 (SAPGSGALPKAPPSSGSSSSSSSCSS) and 795–806 (SSTTPAKDSSSS). Residue lysine 814 forms a Glycyl lysine isopeptide (Lys-Gly) (interchain with G-Cter in SUMO2) linkage. The segment covering 815 to 833 (FSRDRESRSPFLKPDERAP) has biased composition (basic and acidic residues). Phosphoserine occurs at positions 821 and 823. Residues 845–877 (KPKKTKAKAKAGAKKAKGTKGKTKPSKTRKKVR) are compositionally biased toward basic residues. Serine 878, serine 885, serine 912, and serine 914 each carry phosphoserine. Pro residues predominate over residues 924 to 937 (STPPPKVAPPPPAL). Residues threonine 925 and threonine 938 each carry the phosphothreonine modification. The span at 940–949 (DSQTVDSSCK) shows a compositional bias: polar residues. Position 941 is a phosphoserine (serine 941). Phosphothreonine is present on threonine 950. Positions 971 to 986 (EEEEEEEEEEEEEEEQ) are enriched in acidic residues. A compositionally biased stretch (low complexity) spans 987-1019 (QPATTTATSTAAAAPSTAPSAGSTAGDSGAEDG). Residues 1133 to 1258 (PASDKREGSS…GGPGLPLPPL (126 aa)) form a necessary for interaction with the CTD domain of POLR2A region. A compositionally biased stretch (basic and acidic residues) spans 1135-1154 (SDKREGSSSSEGRGDTDKYL). Residues 1246 to 1258 (PDKGGPGLPLPPL) are compositionally biased toward pro residues.

It belongs to the splicing factor SR family. In terms of assembly, interacts with POLR2A.

The protein resides in the nucleus. Its function is as follows. May function in pre-mRNA splicing. The sequence is that of Splicing factor, arginine/serine-rich 19 (Scaf1) from Rattus norvegicus (Rat).